Reading from the N-terminus, the 227-residue chain is Large ribosomal subunit protein uL3 (227 aa).

Q154 is subject to N5-methylglutamine.

This sequence belongs to the universal ribosomal protein uL3 family. In terms of assembly, part of the 50S ribosomal subunit. Forms a cluster with proteins L14 and L19. Post-translationally, methylated by PrmB.

Its function is as follows. One of the primary rRNA binding proteins, it binds directly near the 3'-end of the 23S rRNA, where it nucleates assembly of the 50S subunit. This chain is Large ribosomal subunit protein uL3, found in Acidiphilium cryptum (strain JF-5).